We begin with the raw amino-acid sequence, 56 residues long: Protein hunchback (56 aa).

3 consecutive C2H2-type zinc fingers follow at residues 1–5, 11–33, and 39–56; these read HLRNH, FRCD…LKSH, and YRCA…SLKL.

This sequence belongs to the hunchback C2H2-type zinc-finger protein family.

It is found in the nucleus. Gap class segmentation protein that controls development of head structures. The protein is Protein hunchback (hb) of Locusta migratoria (Migratory locust).